We begin with the raw amino-acid sequence, 351 residues long: Outer membrane protein A (351 aa).

The N-terminal stretch at 1–21 (MKKTAIAIAVALAGFATVAQA) is a signal peptide. 8 beta stranded membrane passes run 27–37 (TWYTGAKLGWS), 55–66 (QLGAGAFGGYQV), 70–78 (VGFEMGYDW), 96–107 (QGVQLTAKLGYP), 112–120 (LDIYTRLGG), 147–156 (PVFAGGVEWA), 161–168 (IATRLEYQ), and 187–195 (LLSLGVSYR). Tandem repeats lie at residues 206 to 207 (AP), 208 to 209 (AP), 210 to 211 (AP), and 212 to 213 (AP). Residues 206–213 (APAPAPAP) form a 4 X 2 AA tandem repeats of A-P region. One can recognise an OmpA-like domain in the interval 215–343 (VQTKHFTLKS…RVEIEVKGIK (129 aa)). Cys-316 and Cys-328 are joined by a disulfide.

It belongs to the outer membrane OOP (TC 1.B.6) superfamily. OmpA family. In terms of assembly, monomer and homodimer.

The protein resides in the cell outer membrane. Functionally, with TolR probably plays a role in maintaining the position of the peptidoglycan cell wall in the periplasm. Acts as a porin with low permeability that allows slow penetration of small solutes; an internal gate slows down solute passage. Required for conjugation with F-type plasmids; probably serves as the mating receptor on recipient cells. The protein is Outer membrane protein A of Escherichia fergusonii (strain ATCC 35469 / DSM 13698 / CCUG 18766 / IAM 14443 / JCM 21226 / LMG 7866 / NBRC 102419 / NCTC 12128 / CDC 0568-73).